The chain runs to 171 residues: MARPAPWWRLRLLAALVLALALVPVPSAWAGQTPRPAERGPPVRLFTEEELARYGGEEEDQPIYLAVKGVVFDVTSGKEFYGRGAPYNALAGKDSSRGVAKMSLDPADLTHDTTGLTAKELEALDDVFSKVYKAKYPIVGYTARRILNEDGSPNLDFKPEDQPHFDIKDEF.

Residues 1–30 (MARPAPWWRLRLLAALVLALALVPVPSAWA) form the signal peptide. A Cytochrome b5 heme-binding domain is found at 43–128 (VRLFTEEELA…KELEALDDVF (86 aa)). K135 carries the post-translational modification N6-acetyllysine.

It belongs to the cytochrome b5 family. MAPR subfamily. Interacts with PINK1 and PARK7. As to expression, in the embryo, expressed most abundantly in brain and spinal cord. Widely expressed in adult tissues including brain, heart, lung and kidney. In brain, expressed in neurons but not in glial cells. In the hypothalamus is expressed primarily in the paraventricular nucleus (PVN), with lower levels of expression in the arcuate nucleus (ARC).

The protein localises to the secreted. The protein resides in the extracellular space. It localises to the mitochondrion. Its subcellular location is the endoplasmic reticulum. Its function is as follows. Acts as a neurotrophic factor in postnatal mature neurons, enhancing neuronal survival. Promotes cell proliferation and neurogenesis in undifferentiated neural pro-genitor cells at the embryonic stage and inhibits differentiation of astrocytes. Its neurotrophic activity is exerted via MAPK1/ERK2, MAPK3/ERK1 and AKT1/AKT pathways. Neurotrophic activity is enhanced by binding to heme. Also acts as an anorexigenic neurotrophic factor that contributes to energy balance. The chain is Neudesin from Mus musculus (Mouse).